Reading from the N-terminus, the 475-residue chain is Pyruvate kinase (475 aa).

R33 provides a ligand contact to substrate. Residues N35, S37, and D67 each coordinate K(+). 35–38 (NFSH) is a binding site for ATP. ATP is bound by residues R74 and K155. Residue E220 coordinates Mg(2+). Substrate is bound by residues G243, D244, and T276. D244 serves as a coordination point for Mg(2+).

The protein belongs to the pyruvate kinase family. In terms of assembly, homotetramer. It depends on Mg(2+) as a cofactor. Requires K(+) as cofactor.

The catalysed reaction is pyruvate + ATP = phosphoenolpyruvate + ADP + H(+). It participates in carbohydrate degradation; glycolysis; pyruvate from D-glyceraldehyde 3-phosphate: step 5/5. In Corynebacterium glutamicum (strain ATCC 13032 / DSM 20300 / JCM 1318 / BCRC 11384 / CCUG 27702 / LMG 3730 / NBRC 12168 / NCIMB 10025 / NRRL B-2784 / 534), this protein is Pyruvate kinase (pyk).